The chain runs to 428 residues: Cell division cycle 20.6, cofactor of APC complex (428 aa).

WD repeat units lie at residues 106 to 145 (WFLTDNLVFFFVDIEEYIVIEQLGDTVYLWDASSCYTSKL), 150 to 189 (DENGPVTSINWTQDGLDLAVGLDNSEVQVWDCVSNRHVRT), 193 to 230 (GHESRVGSLAWNNHILTTGGMDGKIVNNDVRIRSSIIG), 234 to 273 (GHTEEVCGLKWSESGKKLASGGNDNVVHIWDRSLASSNPT), 282 to 324 (EHTA…CLNS), 326 to 367 (ETGS…KMAE), and 370 to 409 (GHTSRVLFMAQSPDGCTVASAAGDETLRLWNVFGEPPKTT).

Belongs to the WD repeat CDC20/Fizzy family. The APC/C is composed of at least 11 subunits that stay tightly associated throughout the cell cycle.

It localises to the nucleus. Its pathway is protein modification; protein ubiquitination. Its function is as follows. Component of the anaphase promoting complex/cyclosome (APC/C), a cell cycle-regulated E3 ubiquitin-protein ligase complex that controls progression through mitosis and the G1 phase of the cell cycle. In Arabidopsis thaliana (Mouse-ear cress), this protein is Cell division cycle 20.6, cofactor of APC complex (CDC20-6).